An 854-amino-acid chain; its full sequence is Cell division control protein 24 (854 aa).

Over residues 1-14 (MAIQTRFASGTSLS) the composition is skewed to polar residues. Positions 1–24 (MAIQTRFASGTSLSDLKPKPSATS) are disordered. One can recognise a Calponin-homology (CH) domain in the interval 135 to 246 (PNMEDTLLTF…VVETLMNSSP (112 aa)). Residues 278 to 454 (EYVKIIKEFV…KNIARSINEN (177 aa)) form the DH domain. One can recognise a PH domain in the interval 478–668 (RISKFGELLY…WSSCLQQLIH (191 aa)). 2 disordered regions span residues 542–571 (ISAS…SNNI) and 674–745 (QFKA…FESE). The segment covering 682–707 (STSTTSSTAKSSSMMSPTTTMNTPNH) has biased composition (low complexity). The region spanning 761–854 (SILFRISYNN…NEKFLNIRLY (94 aa)) is the PB1 domain.

As to quaternary structure, interacts with AXL2.

In terms of biological role, promotes the exchange of CDC42-bound GDP by GTP. Controls the polarity of calmodulin, and the calcium regulatory process of bud emergence. CDC24 may be involved in the initial selection and organization of the budding site. This Saccharomyces cerevisiae (strain ATCC 204508 / S288c) (Baker's yeast) protein is Cell division control protein 24 (CDC24).